We begin with the raw amino-acid sequence, 179 residues long: Probable RNA 2'-phosphotransferase (179 aa).

This sequence belongs to the KptA/TPT1 family.

Functionally, removes the 2'-phosphate from RNA via an intermediate in which the phosphate is ADP-ribosylated by NAD followed by a presumed transesterification to release the RNA and generate ADP-ribose 1''-2''-cyclic phosphate (APPR&gt;P). May function as an ADP-ribosylase. The polypeptide is Probable RNA 2'-phosphotransferase (Fusobacterium nucleatum subsp. nucleatum (strain ATCC 25586 / DSM 15643 / BCRC 10681 / CIP 101130 / JCM 8532 / KCTC 2640 / LMG 13131 / VPI 4355)).